A 465-amino-acid chain; its full sequence is Na(+)-translocating NADH-quinone reductase subunit A (465 aa).

Belongs to the NqrA family. In terms of assembly, composed of six subunits; NqrA, NqrB, NqrC, NqrD, NqrE and NqrF.

It carries out the reaction a ubiquinone + n Na(+)(in) + NADH + H(+) = a ubiquinol + n Na(+)(out) + NAD(+). Its function is as follows. NQR complex catalyzes the reduction of ubiquinone-1 to ubiquinol by two successive reactions, coupled with the transport of Na(+) ions from the cytoplasm to the periplasm. NqrA to NqrE are probably involved in the second step, the conversion of ubisemiquinone to ubiquinol. In Chlamydia trachomatis serovar L2b (strain UCH-1/proctitis), this protein is Na(+)-translocating NADH-quinone reductase subunit A.